The chain runs to 308 residues: Acetyl-coenzyme A carboxylase carboxyl transferase subunit beta (308 aa).

In terms of domain architecture, CoA carboxyltransferase N-terminal spans V25–P294. Zn(2+) contacts are provided by C29, C32, C48, and C51. The C4-type zinc-finger motif lies at C29–C51.

Belongs to the AccD/PCCB family. In terms of assembly, acetyl-CoA carboxylase is a heterohexamer composed of biotin carboxyl carrier protein (AccB), biotin carboxylase (AccC) and two subunits each of ACCase subunit alpha (AccA) and ACCase subunit beta (AccD). It depends on Zn(2+) as a cofactor.

The protein localises to the cytoplasm. It carries out the reaction N(6)-carboxybiotinyl-L-lysyl-[protein] + acetyl-CoA = N(6)-biotinyl-L-lysyl-[protein] + malonyl-CoA. The protein operates within lipid metabolism; malonyl-CoA biosynthesis; malonyl-CoA from acetyl-CoA: step 1/1. Component of the acetyl coenzyme A carboxylase (ACC) complex. Biotin carboxylase (BC) catalyzes the carboxylation of biotin on its carrier protein (BCCP) and then the CO(2) group is transferred by the transcarboxylase to acetyl-CoA to form malonyl-CoA. The polypeptide is Acetyl-coenzyme A carboxylase carboxyl transferase subunit beta (Vibrio vulnificus (strain CMCP6)).